Consider the following 221-residue polypeptide: GTP-binding nuclear protein Ran-A1 (221 aa).

In terms of domain architecture, Small GTPase Ran-type spans 10–174 (DYPSFKLVIV…LYLARKLAGD (165 aa)). Residue 21–28 (DGGTGKTT) participates in GTP binding. The switch-I stretch occupies residues 40-48 (KKYEPTIGV). Residues Gly-71, 125-128 (NKVD), and 153-155 (SAK) each bind GTP. The switch-II stretch occupies residues 71–87 (GQEKFGGLRDGYYIHGQ). The segment covering 199 to 208 (QHEAELAAAA) has biased composition (low complexity). The disordered stretch occupies residues 199 to 221 (QHEAELAAAASQPLPDDDDETFD).

It belongs to the small GTPase superfamily. Ran family. Found in a nuclear export complex with RanGTP, exportin and pre-miRNA.

The protein resides in the nucleus. In terms of biological role, GTP-binding protein involved in nucleocytoplasmic transport. Required for the import of protein into the nucleus and also for RNA export. Involved in chromatin condensation and control of cell cycle. The chain is GTP-binding nuclear protein Ran-A1 (RAN-A1) from Nicotiana tabacum (Common tobacco).